The primary structure comprises 101 residues: UPF0751 protein DSY3086 (101 aa).

It belongs to the UPF0751 family.

The sequence is that of UPF0751 protein DSY3086 from Desulfitobacterium hafniense (strain Y51).